The following is a 216-amino-acid chain: MGQKINPLGFRLGTTQSHHSFWFAQPRNFSTGLQEDEKIRNSIKNYIQKNRRISSGFEGIARIRIKKRIDLIQVIIHIGFPNLLIEGRTRGIEELQINVQKEFHFSNRRLKIAITRVEKPYEQANILAEYIALQLKNRVSFRKAMKKAIELTEQTDTKGIQVQIAGRIDGKEIARVEWIREGRVPLQTIRAKIDHCSYTIRTIYGVLGIKIWIFVD.

A KH type-2 domain is found at 43–118 (IKNYIQKNRR…RLKIAITRVE (76 aa)).

The protein belongs to the universal ribosomal protein uS3 family. Part of the 30S ribosomal subunit.

It is found in the plastid. It localises to the chloroplast. This is Small ribosomal subunit protein uS3c (rps3) from Dioscorea elephantipes (Elephant's foot yam).